The primary structure comprises 372 residues: Chloroplast protein FOR GROWTH AND FERTILITY 2 (372 aa).

The tract at residues 1–20 (MDRLLQPPSSHSIAPSKFQS) is disordered. A chloroplast-targeting transit peptide spans 1–78 (MDRLLQPPSS…NQSSNFLIAS (78 aa)). A compositionally biased stretch (polar residues) spans 7-20 (PPSSHSIAPSKFQS). A run of 7 helical transmembrane segments spans residues 109-129 (VILV…PPAF), 161-181 (FFAG…LAPL), 195-215 (ALWG…FLLL), 231-251 (VVGL…SEMP), 281-301 (GIVH…LALP), 309-329 (FLIM…VFIG), and 352-372 (LVAI…FSLY).

As to expression, mostly expressed in leaves, stems and flowers, to a lower extent, in roots, floral bud, inflorescence and siliques, and, barely, in seedlings.

Its subcellular location is the plastid. The protein resides in the chloroplast membrane. It localises to the plastid membrane. In terms of biological role, together with CGF1, essential protein which supports female gametogenesis and embryogenesis, probably by securing local energy supply. This is Chloroplast protein FOR GROWTH AND FERTILITY 2 from Arabidopsis thaliana (Mouse-ear cress).